Reading from the N-terminus, the 414-residue chain is tRNA(Ile)-lysidine synthase (414 aa).

Residue 17-22 (SGGCDS) coordinates ATP.

The protein belongs to the tRNA(Ile)-lysidine synthase family.

The protein resides in the cytoplasm. It carries out the reaction cytidine(34) in tRNA(Ile2) + L-lysine + ATP = lysidine(34) in tRNA(Ile2) + AMP + diphosphate + H(+). In terms of biological role, ligates lysine onto the cytidine present at position 34 of the AUA codon-specific tRNA(Ile) that contains the anticodon CAU, in an ATP-dependent manner. Cytidine is converted to lysidine, thus changing the amino acid specificity of the tRNA from methionine to isoleucine. This is tRNA(Ile)-lysidine synthase from Exiguobacterium sibiricum (strain DSM 17290 / CCUG 55495 / CIP 109462 / JCM 13490 / 255-15).